An 800-amino-acid polypeptide reads, in one-letter code: MDFHSVLRMAAAKPGPDGVMKRYSLAVGPPRKDPKVKGVNSAAVQAFLRKKDQEIQNKEVEAKRKKEGLLAKRKELKHDRKARAMASRTKDNFRGYNGIPVEEKPKKHKGSGLEEGPNESMQSTEEDEEYMTEEELYEYSQSESEREEEQEEMPPQKVAKAAPGKKPPPPALNFTELLRLAERKQHEPVEVIRPLKKEERLRTAEELKELEFLERKAQKADRKDPMRNGQVVKISKGSGDKYYSLKGSHSVEKRSHENSKSSSTEQNGTFRKSSSDNRSREEKSGSVFHTKDSKFPTKSSSAKDCGAKGFRPSATGDCKNRNDSTRASGSTSLRPSSGGSSSVSGRPSGSSEKPGSSSGKPMGGSGSSSARSSSGSGKPTGATGSGKPTGASGSGSARSVGESGSRSGKPTGASGSGLARSVGASGSGSGKPTGATDSGRPTGVSGSGSARSVGASGSGKPTGASVSGSARSVGASGSGKPTGASGSGSARSVGASRSVSGKPTGASGSGKPTGAPGASSGKPAGVSGSVSSFARPRSNSSMAPAKPAASSGSARPSSSGTPRASSTGNSSSNYSRQASSSGAVRPSSGPPTGGTPKGPSPRPGTGPNSVRHNTTSISVSARSSLGSGPGRPVAASATGQSAMAKPKCTVVAETISSKNFVPKSINGHMNGMRSAVPPGHRPNMQPPGRPLPPITSSYKRRIDDDEYDSEMDDFIDDGGECQDEISKHIREIFGYDRNRYRDESDYALRYMESSFREQQKEEARSLRLGIQEDLEELRREEEELKQKAKQLKSAKKMKSR.

The interval 1 to 687 is important for interaction with DNA; the sequence is MDFHSVLRMA…PGHRPNMQPP (687 aa). Positions 53 to 82 form a coiled coil; the sequence is QEIQNKEVEAKRKKEGLLAKRKELKHDRKA. Disordered stretches follow at residues 70–173, 197–646, and 661–698; these read LAKR…PALN, KEER…MAKP, and VPKS…TSSY. Positions 124 to 137 are enriched in acidic residues; it reads TEEDEEYMTEEELY. Over residues 155–164 the composition is skewed to low complexity; it reads PQKVAKAAPG. The stretch at 196–224 forms a coiled coil; the sequence is KKEERLRTAEELKELEFLERKAQKADRKD. 2 stretches are compositionally biased toward basic and acidic residues: residues 197–226 and 249–259; these read KEER…KDPM and HSVEKRSHENS. A compositionally biased stretch (polar residues) spans 260 to 272; sequence KSSSTEQNGTFRK. Over residues 273–295 the composition is skewed to basic and acidic residues; sequence SSSDNRSREEKSGSVFHTKDSKF. Composition is skewed to low complexity over residues 328-360, 367-377, 390-424, 443-501, and 514-581; these read SGST…SSGK, SSSARSSSGSG, GASG…SVGA, GVSG…SVSG, and GAPG…ASSS. Positions 608–626 are enriched in polar residues; sequence NSVRHNTTSISVSARSSLG. The span at 684-693 shows a compositional bias: pro residues; the sequence is MQPPGRPLPP. Residues 688–800 form an important for interaction with histones region; it reads GRPLPPITSS…LKSAKKMKSR (113 aa). Residues 756–800 adopt a coiled-coil conformation; it reads REQQKEEARSLRLGIQEDLEELRREEEELKQKAKQLKSAKKMKSR.

It belongs to the SPT2 family. As to quaternary structure, interacts with histones. Interacts with a heterotetrameric complex formed by histone H3 and H4, especially when the histone tetramer is not bound to DNA.

The protein localises to the nucleus. The protein resides in the nucleolus. Functionally, histone chaperone that stabilizes pre-existing histone tetramers and regulates replication-independent histone exchange on chromatin. Required for normal chromatin refolding in the coding region of transcribed genes, and for the suppression of spurious transcription. Binds DNA and histones and promotes nucleosome assembly (in vitro). Facilitates formation of tetrameric histone complexes containing histone H3 and H4. Modulates RNA polymerase 1-mediated transcription. Binds DNA, with a preference for branched DNA species, such as Y-form DNA and Holliday junction DNA. The sequence is that of Protein SPT2 homolog (spty2d1) from Xenopus laevis (African clawed frog).